Here is a 394-residue protein sequence, read N- to C-terminus: THAP domain-containing protein 5 (394 aa).

The THAP-type zinc-finger motif lies at 1–84 (MPRYCAAICC…LKQTAIPTIF (84 aa)). A disordered region spans residues 86-109 (LPEDNQEKDPSKKKSQKKKLKSEK). The short motif at 320-323 (EHSY) is the HCFC1-binding motif (HBM) element. Residues 347–381 (LELQEQQTLGRLKSLEALIRQLKQENWLSEENVKI) are a coiled coil.

In terms of assembly, interacts with HTRA2; under apoptotic conditions. Interacts with ABRAXAS2. Post-translationally, cleaved by HTRA2 during apoptosis.

It is found in the nucleus. Its function is as follows. Has sequence-specific DNA-binding activity and can function as transcriptional repressor (in vitro). May be a regulator of cell cycle: THAP5 overexpression in human cell lines causes cell cycle arrest at G2/M phase. This is THAP domain-containing protein 5 (THAP5) from Bos taurus (Bovine).